The chain runs to 329 residues: Nitrogenase iron-iron protein beta chain (329 aa).

Residues C20, C45, C104, and S143 each coordinate [8Fe-7S] cluster. The tract at residues 213–288 (SADGSLVSHG…EEGDGKPIPQ (76 aa)) is disordered. Over residues 257 to 271 (RSRRSSARPRSHPQY) the composition is skewed to basic residues.

Belongs to the NifD/NifK/NifE/NifN family. As to quaternary structure, hexamer of two alpha, two beta, and two delta chains. [8Fe-7S] cluster serves as cofactor.

The enzyme catalyses N2 + 8 reduced [2Fe-2S]-[ferredoxin] + 16 ATP + 16 H2O = H2 + 8 oxidized [2Fe-2S]-[ferredoxin] + 2 NH4(+) + 16 ADP + 16 phosphate + 6 H(+). Its function is as follows. This iron-iron protein is part of the nitrogenase complex that catalyzes the key enzymatic reactions in nitrogen fixation. Other nitrogenase complexes utilize a molybdenum-iron protein or a vanadium-iron protein. This is Nitrogenase iron-iron protein beta chain (anfK) from Ruminiclostridium hungatei (Clostridium hungatei).